The following is a 151-amino-acid chain: Large ribosomal subunit protein bL9 (151 aa).

Belongs to the bacterial ribosomal protein bL9 family.

Its function is as follows. Binds to the 23S rRNA. The sequence is that of Large ribosomal subunit protein bL9 from Desulfosudis oleivorans (strain DSM 6200 / JCM 39069 / Hxd3) (Desulfococcus oleovorans).